Consider the following 589-residue polypeptide: Vesicular glutamate transporter 3 (589 aa).

At 1-76 (MPFKAFDTFK…CHCCGLPKRY (76 aa)) the chain is on the cytoplasmic side. A compositionally biased stretch (acidic residues) spans 40–49 (TEEEDNIELN). The tract at residues 40–61 (TEEEDNIELNEEGRPVQTSRPS) is disordered. A helical membrane pass occupies residues 77–97 (IIAIMSGLGFCISFGIRCNLG). The Vesicular portion of the chain corresponds to 98–130 (VAIVEMVNNSTVYVDGKPEIQTAQFNWDPETVG). Asn-106 is a glycosylation site (N-linked (GlcNAc...) asparagine). Residues 131 to 151 (LIHGSFFWGYIMTQIPGGFIS) traverse the membrane as a helical segment. The Cytoplasmic segment spans residues 152 to 153 (NK). Residues 154–174 (FAANRVFGAAIFLTSTLNMFI) traverse the membrane as a helical segment. At 175 to 182 (PSAARVHY) the chain is on the vesicular side. Residues 183–203 (GCVMCVRILQGLVEGVTYPAC) form a helical membrane-spanning segment. Over 204–221 (HGMWSKWAPPLERSRLAT) the chain is Cytoplasmic. The chain crosses the membrane as a helical span at residues 222 to 242 (TSFCGSYAGAVVAMPLAGVLV). The Vesicular portion of the chain corresponds to 243–249 (QYIGWSS). A helical transmembrane segment spans residues 250–270 (VFYIYGMFGIIWYMFWLLQAY). Residues 271 to 314 (ECPAAHPTISNEEKTYIETSIGEGANVVSLSKFSTPWKRFFTSL) are Cytoplasmic-facing. The helical transmembrane segment at 315 to 335 (PVYAIIVANFCRSWTFYLLLI) threads the bilayer. The Vesicular portion of the chain corresponds to 336-353 (SQPAYFEEVFGFAISKVG). Residues 354–374 (LLSAVPHMVMTIVVPIGGQLA) traverse the membrane as a helical segment. Topologically, residues 375–390 (DYLRSRQILTTTAVRK) are cytoplasmic. Residues 391–411 (IMNCGGFGMEATLLLVVGFSH) form a helical membrane-spanning segment. Over 412-413 (TK) the chain is Vesicular. A helical membrane pass occupies residues 414–434 (GVAISFLVLAVGFSGFAISGF). Over 435–447 (NVNHLDIAPRYAS) the chain is Cytoplasmic. A helical transmembrane segment spans residues 448–468 (ILMGISNGVGTLSGMVCPLIV). Topologically, residues 469-481 (GAMTRHKTREEWQ) are vesicular. The helical transmembrane segment at 482–502 (NVFLIAALVHYSGVIFYGVFA) threads the bilayer. Topologically, residues 503–586 (SGEKQEWADP…SYQNEERNFS (84 aa)) are cytoplasmic. The segment at 559 to 589 (KKEWKGQRGATLDEEELTSYQNEERNFSTIS) is disordered. Residues 580–589 (NEERNFSTIS) show a composition bias toward basic and acidic residues.

This sequence belongs to the major facilitator superfamily. Sodium/anion cotransporter family. VGLUT subfamily. As to expression, expressed in amygdala, cerebellum, hippocampus, medulla, spinal cord and thalamus.

The protein localises to the cytoplasmic vesicle. It localises to the secretory vesicle. The protein resides in the synaptic vesicle membrane. Its subcellular location is the cell membrane. It is found in the synapse. The protein localises to the synaptosome. It catalyses the reaction L-glutamate(out) = L-glutamate(in). The enzyme catalyses 3 Na(+)(out) + phosphate(out) = 3 Na(+)(in) + phosphate(in). The catalysed reaction is chloride(in) = chloride(out). The L-glutamate uniporter activity exhibits a biphasic dependence on chloride concentration. Chloride channel activity is allosterically activated by lumenal H(+) and Cl(-) leading to synaptic vesicles acidification. The glutamate transport activity is allosterically activated by lumenal H(+) and Cl(-), preventing non-vesicular L-glutamate release. In terms of biological role, multifunctional transporter that transports L-glutamate as well as multiple ions such as chloride, sodium and phosphate. At the synaptic vesicle membrane, mainly functions as an uniporter that mediates the uptake of L-glutamate into synaptic vesicles at presynaptic nerve terminals of excitatory neural cells. The L-glutamate uniporter activity is electrogenic and is driven by the proton electrochemical gradient, mainly by the electrical gradient established by the vacuolar H(+)-ATPase across the synaptic vesicle membrane. In addition, functions as a chloride channel that allows a chloride permeation through the synaptic vesicle membrane that affects the proton electrochemical gradient and promotes synaptic vesicles acidification. At the plasma membrane, following exocytosis, functions as a symporter of Na(+) and phosphate from the extracellular space to the cytoplasm allowing synaptic phosphate homeostasis regulation. The symporter activity is electrogenic. Moreover, operates synergistically with SLC18A3/VACHT under a constant H(+) gradient, thereby allowing striatal vesicular acetylcholine uptake. The chain is Vesicular glutamate transporter 3 from Homo sapiens (Human).